A 985-amino-acid chain; its full sequence is Lateral signaling target protein 2 homolog (985 aa).

Disordered regions lie at residues 310-453, 498-520, 533-640, and 747-892; these read PLGS…ETDE, EYGA…PSTS, LRLP…SSLS, and DNVF…TTTA. 3 stretches are compositionally biased toward low complexity: residues 327–348, 384–393, and 401–422; these read HPTT…TNTH, SLSPNSTPTA, and PSHS…PADW. The span at 423–453 shows a compositional bias: acidic residues; it reads SDGDDEDEEDDDDDIEVEEEELDSTDDETDE. Phosphoserine occurs at positions 537 and 538. Composition is skewed to basic residues over residues 563–589 and 596–607; these read VYRH…HHQH and HPHRTTRSGRKR. 2 stretches are compositionally biased toward low complexity: residues 629-640 and 761-770; these read ASGDTSAASSLS and NGNQANASAQ. The segment covering 776 to 785 has biased composition (polar residues); sequence GSIQRNNTVD. The residue at position 808 (S808) is a Phosphoserine. A compositionally biased stretch (low complexity) spans 812–866; the sequence is QESASTSTSSSQLHQEQQQLQIQVQRQRNNSVGSNTPSSASSTSSSSEQNSPVSA. The span at 875-885 shows a compositional bias: polar residues; sequence QSNNETQMPSS. An FYVE-type zinc finger spans residues 904-964; it reads DGKAPRCMSC…VCRECYVREV (61 aa). Zn(2+) is bound by residues C910, C913, C926, C929, C934, C937, C956, and C959.

The protein belongs to the lst-2 family.

In terms of biological role, negative regulator of epidermal growth factor receptor (EGFR) signaling. In Drosophila ananassae (Fruit fly), this protein is Lateral signaling target protein 2 homolog.